The following is a 106-amino-acid chain: Nucleoid-associated protein DIP0260 (106 aa).

This sequence belongs to the YbaB/EbfC family. In terms of assembly, homodimer.

The protein localises to the cytoplasm. It is found in the nucleoid. Its function is as follows. Binds to DNA and alters its conformation. May be involved in regulation of gene expression, nucleoid organization and DNA protection. The polypeptide is Nucleoid-associated protein DIP0260 (Corynebacterium diphtheriae (strain ATCC 700971 / NCTC 13129 / Biotype gravis)).